Reading from the N-terminus, the 362-residue chain is Putative transport protein BB_0006 (362 aa).

Transmembrane regions (helical) follow at residues 20–40 (FYCIVIVLIFIGAFKIAEAVF), 43–63 (LAISIVLGFLVYPVYTFLARF), 68–88 (FLIVFIIFFLLFSFSYLIFSF), 144–164 (EIIGFTSSLVVVFLLLYFLLS), 212–232 (ILVFIGLTLFGQDFPLVWAVL), 234–254 (FVFNFIPSIGSILAVFFIVIT), 265–285 (IVLYVFIYNTSIQMLIGNILE), and 304–326 (LFFWGWLWGIVGLLISYPFTVIV).

The protein belongs to the autoinducer-2 exporter (AI-2E) (TC 2.A.86) family.

It localises to the cell membrane. In Borreliella burgdorferi (strain ATCC 35210 / DSM 4680 / CIP 102532 / B31) (Borrelia burgdorferi), this protein is Putative transport protein BB_0006.